A 636-amino-acid polypeptide reads, in one-letter code: Protein SOSEKI 2 (636 aa).

A DIX-like oligomerization domain region spans residues 9–103 (HKIEVIYLLS…YVLKALEVMD (95 aa)). Disordered stretches follow at residues 164 to 188 (VHNN…SRVP), 281 to 304 (HGRL…TVDI), 340 to 393 (VEGS…TSAK), and 499 to 524 (LGSG…VSRP). 2 stretches are compositionally biased toward polar residues: residues 375 to 390 (SSKS…TYET) and 499 to 510 (LGSGQASESFSP).

It belongs to the SOSEKI family. Homodimer. Forms long polymer filaments with other SOKs proteins polymers crucial for polar localization and biological activity.

The protein resides in the cell membrane. SOSEKI proteins locally interpret global polarity cues and can influence cell division orientation to coordinate cell polarization relative to body axes. The sequence is that of Protein SOSEKI 2 from Physcomitrium patens (Spreading-leaved earth moss).